The sequence spans 489 residues: Probable transporter MCH1 (489 aa).

3 helical membrane passes run 30 to 50 (IAYI…LISL), 68 to 88 (MIVT…GIIA), and 92 to 112 (GPIT…AYLA). Asn123 is a glycosylation site (N-linked (GlcNAc...) asparagine). 8 helical membrane-spanning segments follow: residues 132 to 152 (TLVC…SALI), 163 to 183 (LLSI…GSQF), 202 to 222 (VFKA…IATS), 279 to 299 (VLYI…MFIA), 307 to 327 (VLAG…YALT), 351 to 371 (WILL…YMLS), 388 to 408 (FYIG…YPTI), and 421 to 441 (AYGT…LIYA). An N-linked (GlcNAc...) asparagine glycan is attached at Asn450. The helical transmembrane segment at 462 to 482 (ETTALEFCAAILLTVVVTVLW) threads the bilayer.

Belongs to the major facilitator superfamily.

Its subcellular location is the vacuole membrane. Probable transporter. The polypeptide is Probable transporter MCH1 (MCH1) (Candida glabrata (strain ATCC 2001 / BCRC 20586 / JCM 3761 / NBRC 0622 / NRRL Y-65 / CBS 138) (Yeast)).